A 366-amino-acid chain; its full sequence is Cell division protein FtsZ 1 (366 aa).

Residues 45–49 (GAGCN), 132–134 (GTG), Glu163, Arg167, and Asp210 each bind GTP. The segment covering 344 to 354 (PEEETPLETPE) has biased composition (acidic residues). The interval 344-366 (PEEETPLETPEESPSIEISIPEL) is disordered. A compositionally biased stretch (low complexity) spans 355 to 366 (ESPSIEISIPEL).

It belongs to the FtsZ family. In terms of assembly, homodimer. Polymerizes to form a dynamic ring structure in a strictly GTP-dependent manner. Interacts directly with several other division proteins.

The protein resides in the cytoplasm. Functionally, essential cell division protein that forms a contractile ring structure (Z ring) at the future cell division site. The regulation of the ring assembly controls the timing and the location of cell division. One of the functions of the FtsZ ring is to recruit other cell division proteins to the septum to produce a new cell wall between the dividing cells. Binds GTP and shows GTPase activity. The sequence is that of Cell division protein FtsZ 1 from Pyrococcus woesei.